The primary structure comprises 446 residues: uncharacterized protein (446 aa).

A phosphoserine mark is found at Ser-393 and Ser-397. Residues Leu-411–Gln-431 are disordered.

Belongs to the IFRD family.

It is found in the cytoplasm. This is an uncharacterized protein from Schizosaccharomyces pombe (strain 972 / ATCC 24843) (Fission yeast).